The primary structure comprises 707 residues: Protein MICRORCHIDIA 7 (707 aa).

2 stretches are compositionally biased toward basic and acidic residues: residues 1–11 and 575–587; these read MDNSIHVKREI and DNRD…DREG. 2 disordered regions span residues 1 to 22 and 568 to 619; these read MDNS…AGFP and EKSA…SGKD. The span at 590–613 shows a compositional bias: polar residues; sequence SIKTPTPASDKFYSSSYPNHNGDN. Residues 620-701 are a coiled coil; it reads GARLQEELRR…NKIKKMEGSK (82 aa). The Nuclear localization signal signature appears at 633 to 640; that stretch reads RRKALEVE.

Belongs to the MORC ATPase protein family. As to quaternary structure, homodimer and heterodimer. Component of an RNA-directed DNA methylation (RdDM) complex. Forms homomeric complexes. It depends on Mg(2+) as a cofactor. Requires Mn(2+) as cofactor.

Its subcellular location is the nucleus. In terms of biological role, exhibits ATPase activity. Binds DNA/RNA in a non-specific manner and exhibits endonuclease activity. Probably involved in DNA repair. Involved in RNA-directed DNA methylation (RdDM) as a component of the RdDM machinery and required for gene silencing. May also be involved in the regulation of chromatin architecture to maintain gene silencing. Together with MORC4, acts to suppress a wide set of non-methylated protein-coding genes, especially involved in pathogen response. Positive regulators of defense against the oomycete Hyaloperonospora arabidopsidis (Hpa). This Arabidopsis thaliana (Mouse-ear cress) protein is Protein MICRORCHIDIA 7.